The chain runs to 194 residues: Peroxiredoxin 2 (194 aa).

The Thioredoxin domain occupies 2–160; sequence PQLQKPAPAF…TLRLVQAFQY (159 aa). The active-site Cysteine sulfenic acid (-SOH) intermediate is the cysteine 47. A Phosphothreonine modification is found at threonine 193. Serine 194 bears the Phosphoserine mark.

This sequence belongs to the peroxiredoxin family. AhpC/Prx1 subfamily. In terms of assembly, homodimer; disulfide-linked, upon oxidation. 5 homodimers assemble to form a ring-like decamer. Also exists as a monomer. The enzyme can be inactivated by further oxidation of the cysteine sulfenic acid (C(P)-SOH) to sulphinic acid (C(P)-SO2H) instead of its condensation to a disulfide bond. It can be reactivated by forming a transient disulfide bond with sulfiredoxin SRXN1, which reduces the cysteine sulfinic acid in an ATP- and Mg-dependent manner. In terms of processing, conjugated to URM1, a ubiquitin-like protein. As to expression, detected in the head and body (at protein level).

It localises to the cytoplasm. The catalysed reaction is a hydroperoxide + [thioredoxin]-dithiol = an alcohol + [thioredoxin]-disulfide + H2O. Its function is as follows. Thiol-specific peroxidase that catalyzes the reduction of hydrogen peroxide and organic hydroperoxides to water and alcohols, respectively. Plays a role in cell protection against oxidative stress by detoxifying peroxides and as sensor of hydrogen peroxide-mediated signaling events. Might participate in the signaling cascades of growth factors and tumor necrosis factor-alpha by regulating the intracellular concentrations of H(2)O(2). Reduces an intramolecular disulfide bond in GDPD5 that gates the ability to GDPD5 to drive postmitotic motor neuron differentiation. The chain is Peroxiredoxin 2 from Drosophila melanogaster (Fruit fly).